The following is a 79-amino-acid chain: RNA-binding protein KhpA (79 aa).

Positions 32-79 (TVVIELRVDPAELGKVIGKQGRIARALRTILTAIGRKIGKRVVLEILE) constitute a KH domain.

This sequence belongs to the KhpA RNA-binding protein family.

Its subcellular location is the cytoplasm. Its function is as follows. A probable RNA-binding protein. The chain is RNA-binding protein KhpA from Aquifex aeolicus (strain VF5).